The sequence spans 75 residues: Tautomerase PptA (75 aa).

Proline 2 functions as the Proton acceptor; via imino nitrogen in the catalytic mechanism.

Belongs to the 4-oxalocrotonate tautomerase family. PptA subfamily. Homodimer.

The protein resides in the cytoplasm. The sequence is that of Tautomerase PptA from Klebsiella pneumoniae (strain 342).